Consider the following 714-residue polypeptide: Epithelial splicing regulatory protein 1 (714 aa).

RRM domains are found at residues 225–302 (TVIR…KATG), 326–406 (IIVR…KSTA), and 450–530 (DCVR…ACSA).

It belongs to the ESRP family.

Its subcellular location is the nucleus. Its function is as follows. mRNA splicing factor that regulates the formation of epithelial cell-specific isoforms. Specifically regulates the expression of FGFR2-IIIb, an epithelial cell-specific isoform of fgfr2. Acts by directly binding specific sequences in mRNAs. Binds the GU-rich sequence motifs in the ISE/ISS-3, a cis-element regulatory region present in the mRNA of fgfr2. The polypeptide is Epithelial splicing regulatory protein 1 (esrp1) (Danio rerio (Zebrafish)).